We begin with the raw amino-acid sequence, 506 residues long: Xaa-Pro aminopeptidase 3 (506 aa).

The N-terminal 31 residues, 1–31, are a transit peptide targeting the mitochondrion; the sequence is MPSLLSTPKLAPVLARLRGLSGCMSCLQRRY. The tract at residues 54–79 is interaction with TNFRSF1B; that stretch reads HPHLLRPGEVTPGLSQVEYALRRHKL. Substrate contacts are provided by Tyr-300, Asp-331, Asp-342, His-423, His-430, Glu-450, and Glu-474. Mn(2+)-binding residues include Asp-331, Asp-342, and His-423. Glu-450 and Glu-474 together coordinate Mn(2+).

This sequence belongs to the peptidase M24B family. Homodimer. Interacts with TNFRSF1B/TNFR2 (activated) and TRAF2. It depends on Mn(2+) as a cofactor. In terms of tissue distribution, expressed in brain, kidney, heart, liver, skeletal muscle and testis.

The protein localises to the mitochondrion. Its subcellular location is the cytoplasm. The catalysed reaction is Release of any N-terminal amino acid, including proline, that is linked to proline, even from a dipeptide or tripeptide.. Its function is as follows. Catalyzes the removal of a penultimate prolyl residue from the N-termini of peptides, such as Leu-Pro-Ala. Also shows low activity towards peptides with Ala or Ser at the P1 position. Promotes TNFRSF1B-mediated phosphorylation of MAPK8/JNK1 and MAPK9/JNK2, suggesting a function as an adapter protein for TNFRSF1B; the effect is independent of XPNPEP3 peptidase activity. May inhibit apoptotic cell death induced via TNF-TNFRSF1B signaling. The protein is Xaa-Pro aminopeptidase 3 (Xpnpep3) of Mus musculus (Mouse).